Here is a 2181-residue protein sequence, read N- to C-terminus: Non-reducing polyketide synthase dpmaA (2181 aa).

Residues 74-180 (QWVKGNSTQP…LALCCGAYID (107 aa)) are N-terminal acylcarrier protein transacylase domain (SAT). The Ketosynthase family 3 (KS3) domain occupies 347 to 779 (QAQLLVLGPV…GTNAAMLVCQ (433 aa)). Residues Cys525, His661, and His702 each act as for beta-ketoacyl synthase activity in the active site. The malonyl-CoA:ACP transacylase (MAT) domain stretch occupies residues 891–1193 (VLAGQTGRRV…SFYPAALGEP (303 aa)). Residue Ser977 is the For acyl/malonyl transferase activity of the active site. The tract at residues 1269–1401 (VSLIGKTQNA…GVITLQEVYS (133 aa)) is N-terminal hotdog fold. The 311-residue stretch at 1269-1579 (VSLIGKTQNA…FQKIAISSLK (311 aa)) folds into the PKS/mFAS DH domain. The tract at residues 1276 to 1573 (QNAGVQTVEY…TILGAKFQKI (298 aa)) is product template (PT) domain. Residues 1425–1579 (SASVVQGDFI…FQKIAISSLK (155 aa)) are C-terminal hotdog fold. Positions 1587-1603 (GVPQTSGGRTPSSSITE) are enriched in polar residues. Disordered stretches follow at residues 1587–1618 (GVPQ…PIPG) and 1652–1675 (ISGS…AMET). Residues 1653-1670 (SGSSRSTSSSPPSLESRS) show a composition bias toward low complexity. One can recognise a Carrier domain in the interval 1677–1753 (EITEGAGSAL…TLFHTIFPQQ (77 aa)). An O-(pantetheine 4'-phosphoryl)serine modification is found at Ser1713. Residues 1982 to 2164 (EFMNCLFSYN…QSGFDHIDWT (183 aa)) are methyltransferase (CMeT) domain.

The protein operates within secondary metabolite biosynthesis; terpenoid biosynthesis. Functionally, non-reducing polyketide synthase; part of the gene cluster that mediates the biosynthesis of the diterpenoid pyrones subglutinols A and B. The first step of the pathway is the synthesis of the alpha-pyrone moiety by the polyketide synthase dpmaA via condensation of one acetyl-CoA starter unit with 3 malonyl-CoA units and 2 methylations. The alpha-pyrone is then combined with geranylgeranyl pyrophosphate (GGPP) formed by the GGPP synthase dpmaD through the action of the prenyltransferase dpmaC to yield a linear alpha-pyrone diterpenoid. Subsequent steps in the diterpenoid pyrone biosynthetic pathway involve the decalin core formation, which is initiated by the epoxidation of the C10-C11 olefin by the FAD-dependent oxidoreductase dpmaE, and is followed by a cyclization cascade catalyzed by the terpene cyclase dpmaB. The dehydrogenase dpmaF is then involved in tetrahydrofuran (THF) ring formation at the C5 unit to complete the formation of subglutinols A and B. The polypeptide is Non-reducing polyketide synthase dpmaA (Metarhizium anisopliae (Entomophthora anisopliae)).